Consider the following 283-residue polypeptide: Elongation factor Ts (283 aa).

The segment at 82–85 (TDFV) is involved in Mg(2+) ion dislocation from EF-Tu.

It belongs to the EF-Ts family.

Its subcellular location is the cytoplasm. Functionally, associates with the EF-Tu.GDP complex and induces the exchange of GDP to GTP. It remains bound to the aminoacyl-tRNA.EF-Tu.GTP complex up to the GTP hydrolysis stage on the ribosome. The chain is Elongation factor Ts from Photorhabdus laumondii subsp. laumondii (strain DSM 15139 / CIP 105565 / TT01) (Photorhabdus luminescens subsp. laumondii).